The following is a 943-amino-acid chain: Lysine-specific demethylase JMJ21 (943 aa).

An F-box domain is found at 14–60 (LGSLSVLPDETICVLLEYLAPRDIAHLACVSSVMYILCNEEPLWMSL). The JmjC domain occupies 216 to 379 (EAAPELLKDY…FVCLDMAPGY (164 aa)). Fe cation-binding residues include histidine 262, aspartate 264, and histidine 347. Positions 396–410 (NSEDLEEETHDEEDN) are enriched in acidic residues. Residues 396–438 (NSEDLEEETHDEEDNTLSYSDLTRKEKRTRMNGGGETENREED) are disordered.

It belongs to the JARID1 histone demethylase family. Fe(2+) serves as cofactor. In terms of tissue distribution, mostly expressed in leaves, and, to a lower extent, in inflorescences, roots, siliques and stems.

It is found in the nucleus. May function as histone H3 lysine demethylase and be involved in regulation of gene expression. This chain is Lysine-specific demethylase JMJ21, found in Arabidopsis thaliana (Mouse-ear cress).